The sequence spans 815 residues: Probable receptor-like protein kinase At2g39360 (815 aa).

Residues 1 to 26 (MINLKLFLELKLCFLITLLCSSHISS) form the signal peptide. Residues 27–407 (VSDTFFINCG…SSSNKSSNTS (381 aa)) lie on the Extracellular side of the membrane. 11 N-linked (GlcNAc...) asparagine glycosylation sites follow: Asn40, Asn45, Asn125, Asn146, Asn209, Asn244, Asn277, Asn331, Asn355, Asn401, and Asn405. A helical membrane pass occupies residues 408–428 (VGLIAGLSAALCVALVFGVVV). The Cytoplasmic segment spans residues 429-815 (SWWCIRKRRR…FAQMVREETR (387 aa)). Residues 487–761 (FDESLVIGVG…GDLLWNLEFM (275 aa)) form the Protein kinase domain. Residues 493 to 501 (IGVGGFGKV) and Lys515 contribute to the ATP site. Residue Asp612 is the Proton acceptor of the active site.

This sequence belongs to the protein kinase superfamily. Ser/Thr protein kinase family.

It localises to the cell membrane. The chain is Probable receptor-like protein kinase At2g39360 from Arabidopsis thaliana (Mouse-ear cress).